A 181-amino-acid polypeptide reads, in one-letter code: Cytochrome c-type biogenesis protein CcmE (181 aa).

At methionine 1–arginine 8 the chain is on the cytoplasmic side. A helical; Signal-anchor for type II membrane protein membrane pass occupies residues leucine 9–alanine 29. Topologically, residues leucine 30–asparagine 181 are periplasmic. Histidine 131 and tyrosine 135 together coordinate heme. Composition is skewed to basic and acidic residues over residues tyrosine 135–histidine 148 and alanine 156–lysine 166. The tract at residues tyrosine 135–lysine 166 is disordered.

It belongs to the CcmE/CycJ family.

It is found in the cell inner membrane. Functionally, heme chaperone required for the biogenesis of c-type cytochromes. Transiently binds heme delivered by CcmC and transfers the heme to apo-cytochromes in a process facilitated by CcmF and CcmH. This is Cytochrome c-type biogenesis protein CcmE from Actinobacillus pleuropneumoniae serotype 7 (strain AP76).